Reading from the N-terminus, the 1216-residue chain is Protein WWC3 (1216 aa).

A disordered region spans residues 1–63 (MPWLSGGRRR…RESAELPLPA (63 aa)). Positions 21 to 51 (EPPPSAQPQREPPPAPPAAVPTPPAPSAPPP) are enriched in pro residues. WW domains are found at residues 59-92 (LPLP…DPRD) and 106-139 (DELP…DPRE). 2 coiled-coil regions span residues 164 to 250 (KEIY…TLQE) and 354 to 468 (DRVR…EATR). Disordered regions lie at residues 487–508 (VSSG…SSRG), 546–612 (GRDA…ADSC), and 634–668 (DLPG…VGGT). Residues 570-598 (PQSLASLSSRSSLSSLSPPSSPLDTPFLP) are compositionally biased toward low complexity. Positions 722 to 847 (SNGDPQIHVG…SLSEMQLRWH (126 aa)) constitute a C2 domain. Residues 885–936 (DAVTVLLARTTAQLQAVERELAEERAKLEYTEEEVLEMERKEEQAEAISERS) adopt a coiled-coil conformation. Residues 1060 to 1079 (SPFVRNTLERRTLRYKQSCR) are interaction with PRKCZ. Residues 1091 to 1160 (LDLELDLQAS…RQTRQTKLDY (70 aa)) adopt a coiled-coil conformation.

This sequence belongs to the WWC family. As to quaternary structure, forms homodimers and heterodimers with WWC1 and WWC2. Interacts with DLC1 and PRKCZ. Interacts (via WW domains) with LATS1 and LATS2.

The protein resides in the cytoplasm. It is found in the cytosol. Its function is as follows. Regulator of the Hippo signaling pathway, also known as the Salvador-Warts-Hippo (SWH) pathway. Enhances phosphorylation of LATS1 and YAP1 and negatively regulates cell proliferation and organ growth due to a suppression of the transcriptional activity of YAP1, the major effector of the Hippo pathway. The polypeptide is Protein WWC3 (Homo sapiens (Human)).